The following is a 335-amino-acid chain: Biotin synthase (335 aa).

Residues Tyr43–Ala269 form the Radical SAM core domain. 3 residues coordinate [4Fe-4S] cluster: Cys61, Cys65, and Cys68. Residues Cys104, Cys137, Cys197, and Arg267 each contribute to the [2Fe-2S] cluster site.

Belongs to the radical SAM superfamily. Biotin synthase family. In terms of assembly, homodimer. It depends on [4Fe-4S] cluster as a cofactor. The cofactor is [2Fe-2S] cluster.

It catalyses the reaction (4R,5S)-dethiobiotin + (sulfur carrier)-SH + 2 reduced [2Fe-2S]-[ferredoxin] + 2 S-adenosyl-L-methionine = (sulfur carrier)-H + biotin + 2 5'-deoxyadenosine + 2 L-methionine + 2 oxidized [2Fe-2S]-[ferredoxin]. It functions in the pathway cofactor biosynthesis; biotin biosynthesis; biotin from 7,8-diaminononanoate: step 2/2. Functionally, catalyzes the conversion of dethiobiotin (DTB) to biotin by the insertion of a sulfur atom into dethiobiotin via a radical-based mechanism. This is Biotin synthase from Staphylococcus aureus (strain MRSA252).